A 597-amino-acid polypeptide reads, in one-letter code: Arginine--tRNA ligase (597 aa).

A 'HIGH' region motif is present at residues 125–135 (PNTNKPLHLGH).

It belongs to the class-I aminoacyl-tRNA synthetase family. As to quaternary structure, monomer.

It is found in the cytoplasm. The catalysed reaction is tRNA(Arg) + L-arginine + ATP = L-arginyl-tRNA(Arg) + AMP + diphosphate. This is Arginine--tRNA ligase from Bacteroides thetaiotaomicron (strain ATCC 29148 / DSM 2079 / JCM 5827 / CCUG 10774 / NCTC 10582 / VPI-5482 / E50).